The following is a 662-amino-acid chain: Probable quinol oxidase subunit 1 (662 aa).

2 helical membrane passes run 14–34 (WMITMAQIGAPFLVIGLIAVI) and 58–78 (IMYLICAVLMFVRGGIDALLI). Residue His102 participates in Fe(II)-heme a binding. The next 8 helical transmembrane spans lie at 103 to 123 (GVIMIIFMAMPFIFGLWNIVV), 140 to 160 (VSFWLFFAGMILFNLSFIIGG), 187 to 207 (IAIQISGLGTLATGINFFVTI), 228 to 248 (FITTLIVILAFPPLTVALALM), 273 to 293 (FFWVWGHPEVYIVILPAFGIY), 311 to 331 (MVWATAGIAFLSFLVWVHHFF), 336 to 356 (GALINSFFSISTMLIGIPTGV), and 376 to 396 (MLFSLAFIPNFLLGGVTGVML). Residues His279, Tyr283, His328, and His329 each coordinate Cu cation. The segment at residues 279–283 (HPEVY) is a cross-link (1'-histidyl-3'-tyrosine (His-Tyr)). His414 provides a ligand contact to heme a3. Helical transmembrane passes span 415–435 (FHYTLVTGVVFACLAGLIFWY), 451–471 (CFWFFMIGFNVCFLPQFILGL), 493–513 (ISTIGALLMAIGFLFLVVSIV), 587–604 (PVGFWIGIFMTIGGFFLI), and 608–627 (VIPALICLFGIFGTMIYRSF). Residue His416 participates in Fe(II)-heme a binding.

The protein belongs to the heme-copper respiratory oxidase family. It depends on Cu cation as a cofactor. The cofactor is ferriheme a. Requires Heme A3. as cofactor.

The protein localises to the cell membrane. It carries out the reaction 2 a quinol + O2 = 2 a quinone + 2 H2O. It functions in the pathway energy metabolism; oxidative phosphorylation. In terms of biological role, catalyzes quinol oxidation with the concomitant reduction of oxygen to water. The polypeptide is Probable quinol oxidase subunit 1 (qoxB) (Staphylococcus aureus (strain USA300)).